We begin with the raw amino-acid sequence, 436 residues long: Transcriptional regulator STP3 (436 aa).

The disordered stretch occupies residues 204-277 (EPLDDEFVPP…TKRKYTKKKQ (74 aa)). A compositionally biased stretch (low complexity) spans 230–265 (ISPPASSDSSSSSSYVPQLIPSSSSSVTSNGDSPVS). Residues 268-277 (TKRKYTKKKQ) show a composition bias toward basic residues. The segment at 315–337 (FDCPSCDASFKVKGYLTRHLKKH) adopts a C2H2-type zinc-finger fold.

Activated by the amino acid-induced proteolytic removal of an N-terminal inhibitory domain.

It is found in the cell membrane. It localises to the nucleus. Transcription factor that activates genes required for degradation of extracellular protein and uptake of peptides such as the secreted aspartyl protease SAP2 or the oligopeptide transporter OPT1. Required for virulence. Synthesized as latent cytoplasmic precursor, which, upon a signal initiated by the plasma membrane SPS amino acid sensor system (including CSY1 and CSH3), becomes proteolytically activated and relocates to the nucleus, where it induces the expression of SPS-sensor-regulated genes. The polypeptide is Transcriptional regulator STP3 (STP3) (Candida albicans (strain SC5314 / ATCC MYA-2876) (Yeast)).